Reading from the N-terminus, the 225-residue chain is Imidazole glycerol phosphate synthase subunit HisH (225 aa).

Residues 3–225 (TIAIVDYGMG…LYRNFVDWQP (223 aa)) form the Glutamine amidotransferase type-1 domain. Cysteine 82 acts as the Nucleophile in catalysis. Catalysis depends on residues histidine 205 and glutamate 207.

Heterodimer of HisH and HisF.

The protein resides in the cytoplasm. The enzyme catalyses 5-[(5-phospho-1-deoxy-D-ribulos-1-ylimino)methylamino]-1-(5-phospho-beta-D-ribosyl)imidazole-4-carboxamide + L-glutamine = D-erythro-1-(imidazol-4-yl)glycerol 3-phosphate + 5-amino-1-(5-phospho-beta-D-ribosyl)imidazole-4-carboxamide + L-glutamate + H(+). It catalyses the reaction L-glutamine + H2O = L-glutamate + NH4(+). It participates in amino-acid biosynthesis; L-histidine biosynthesis; L-histidine from 5-phospho-alpha-D-ribose 1-diphosphate: step 5/9. Functionally, IGPS catalyzes the conversion of PRFAR and glutamine to IGP, AICAR and glutamate. The HisH subunit catalyzes the hydrolysis of glutamine to glutamate and ammonia as part of the synthesis of IGP and AICAR. The resulting ammonia molecule is channeled to the active site of HisF. The polypeptide is Imidazole glycerol phosphate synthase subunit HisH (Bordetella bronchiseptica (strain ATCC BAA-588 / NCTC 13252 / RB50) (Alcaligenes bronchisepticus)).